The following is a 148-amino-acid chain: CASP-like protein 1 (148 aa).

A run of 3 helical transmembrane segments spans residues 31–51, 74–94, and 121–141; these read FIYF…TSLL, VLLL…GYIG, and IAAG…SFFT.

It belongs to the Casparian strip membrane proteins (CASP) family. In terms of assembly, homodimer and heterodimers.

The protein resides in the cell membrane. The sequence is that of CASP-like protein 1 from Panax ginseng (Korean ginseng).